The primary structure comprises 480 residues: Ribulose bisphosphate carboxylase large chain (480 aa).

A propeptide spanning residues 1 to 2 (MS) is cleaved from the precursor. An N-acetylproline modification is found at proline 3. The residue at position 14 (lysine 14) is an N6,N6,N6-trimethyllysine. Substrate is bound by residues asparagine 123 and threonine 173. Lysine 175 acts as the Proton acceptor in catalysis. Residue lysine 177 coordinates substrate. Residues lysine 201, aspartate 203, and glutamate 204 each coordinate Mg(2+). N6-carboxylysine is present on lysine 201. Catalysis depends on histidine 294, which acts as the Proton acceptor. The substrate site is built by arginine 295, histidine 327, and serine 379.

It belongs to the RuBisCO large chain family. Type I subfamily. In terms of assembly, heterohexadecamer of 8 large chains and 8 small chains; disulfide-linked. The disulfide link is formed within the large subunit homodimers. The cofactor is Mg(2+). The disulfide bond which can form in the large chain dimeric partners within the hexadecamer appears to be associated with oxidative stress and protein turnover.

The protein resides in the plastid. The protein localises to the chloroplast. It catalyses the reaction 2 (2R)-3-phosphoglycerate + 2 H(+) = D-ribulose 1,5-bisphosphate + CO2 + H2O. The catalysed reaction is D-ribulose 1,5-bisphosphate + O2 = 2-phosphoglycolate + (2R)-3-phosphoglycerate + 2 H(+). In terms of biological role, ruBisCO catalyzes two reactions: the carboxylation of D-ribulose 1,5-bisphosphate, the primary event in carbon dioxide fixation, as well as the oxidative fragmentation of the pentose substrate in the photorespiration process. Both reactions occur simultaneously and in competition at the same active site. The chain is Ribulose bisphosphate carboxylase large chain from Alluaudia procera (Madagascan ocotillo).